A 566-amino-acid polypeptide reads, in one-letter code: Urease subunit alpha (566 aa).

Residues 128–566 (GGVDTHIHFI…LPMAQRYFLF (439 aa)) enclose the Urease domain. Residues H133, H135, and K216 each contribute to the Ni(2+) site. At K216 the chain carries N6-carboxylysine. Residue H218 participates in substrate binding. H245 and H271 together coordinate Ni(2+). H319 functions as the Proton donor in the catalytic mechanism. Residue D359 participates in Ni(2+) binding.

It belongs to the metallo-dependent hydrolases superfamily. Urease alpha subunit family. May form a heterohexamer of 3 UreC (alpha) and 3 UreAB (gamma/beta) subunits. May also form a heterotrimer of UreA (gamma), UreB (beta) and UreC (alpha) subunits. Three heterotrimers associate to form the active enzyme. It depends on Ni cation as a cofactor. In terms of processing, carboxylation allows a single lysine to coordinate two nickel ions.

The protein resides in the cytoplasm. It carries out the reaction urea + 2 H2O + H(+) = hydrogencarbonate + 2 NH4(+). It functions in the pathway nitrogen metabolism; urea degradation; CO(2) and NH(3) from urea (urease route): step 1/1. The protein is Urease subunit alpha of Pseudomonas syringae pv. tomato (strain ATCC BAA-871 / DC3000).